A 128-amino-acid chain; its full sequence is Large ribosomal subunit protein bL17 (128 aa).

The protein belongs to the bacterial ribosomal protein bL17 family. In terms of assembly, part of the 50S ribosomal subunit. Contacts protein L32.

This is Large ribosomal subunit protein bL17 from Streptococcus mutans serotype c (strain ATCC 700610 / UA159).